Consider the following 854-residue polypeptide: DNA mismatch repair protein MutS (854 aa).

ATP is bound at residue 615–622; sequence GPNMGGKS.

The protein belongs to the DNA mismatch repair MutS family.

This protein is involved in the repair of mismatches in DNA. It is possible that it carries out the mismatch recognition step. This protein has a weak ATPase activity. The sequence is that of DNA mismatch repair protein MutS from Proteus mirabilis (strain HI4320).